We begin with the raw amino-acid sequence, 275 residues long: Chemotaxis protein methyltransferase Cher2 (275 aa).

The CheR-type methyltransferase domain occupies 1–275; that stretch reads MSTGNLDFEQ…CSPGIIYQAK (275 aa). S-adenosyl-L-methionine contacts are provided by residues Asn-73, Thr-75, Arg-79, Glu-116, Asp-145, 201–202, and 218–219; these read NL and RN.

As to quaternary structure, monomer.

The catalysed reaction is L-glutamyl-[protein] + S-adenosyl-L-methionine = [protein]-L-glutamate 5-O-methyl ester + S-adenosyl-L-homocysteine. Its function is as follows. Methylation of the membrane-bound methyl-accepting chemotaxis proteins (MCP) to form gamma-glutamyl methyl ester residues in MCP. Methylates the McpS chemotaxis receptor. This is Chemotaxis protein methyltransferase Cher2 (cheR2) from Pseudomonas putida (strain ATCC 47054 / DSM 6125 / CFBP 8728 / NCIMB 11950 / KT2440).